Consider the following 244-residue polypeptide: tRNA pseudouridine synthase A (244 aa).

The active-site Nucleophile is D52. Y111 contributes to the substrate binding site.

It belongs to the tRNA pseudouridine synthase TruA family. As to quaternary structure, homodimer.

The enzyme catalyses uridine(38/39/40) in tRNA = pseudouridine(38/39/40) in tRNA. In terms of biological role, formation of pseudouridine at positions 38, 39 and 40 in the anticodon stem and loop of transfer RNAs. The protein is tRNA pseudouridine synthase A of Thermosipho africanus (strain TCF52B).